The following is a 61-amino-acid chain: DGYIKGKSGCRVACLIGNQGCLKDCRAYGASYGYCWTWGLACWCEGLPDNKTWKSESNTCG.

Residues 1 to 61 (DGYIKGKSGC…TWKSESNTCG (61 aa)) enclose the LCN-type CS-alpha/beta domain. 4 disulfide bridges follow: Cys10–Cys60, Cys14–Cys35, Cys21–Cys42, and Cys25–Cys44. Gly61 is modified (glycine amide).

This sequence belongs to the long (4 C-C) scorpion toxin superfamily. Sodium channel inhibitor family. Beta subfamily. In terms of tissue distribution, expressed by the venom gland.

The protein resides in the secreted. On insects, this depressant beta-toxins cause a transient contraction paralysis followed by a slow flaccid paralysis. They bind voltage-independently at site-4 of sodium channels (Nav) and shift the voltage of activation toward more negative potentials thereby affecting sodium channel activation and promoting spontaneous and repetitive firing. This toxin is active against insects and mammals. It is capable of binding to not only cockroach neuronal membranes, but also rat cerebrocortical and hippocampal synaptosomes. This toxin also has potent peripheral and central suppressive effects on rat nociceptive spontaneous responses, thermal hyperalgesia and spinal c-Fos expression induced by formalin and carrageenan, which may be derived from its modulation on the activity of sodium channels of the neurons. Administration of BmKIT2 into rat brain can also suppress the epileptic seizures significantly. The sequence is that of Beta-insect depressant toxin BmKIT2 from Olivierus martensii (Manchurian scorpion).